Here is a 186-residue protein sequence, read N- to C-terminus: GTP-dependent dephospho-CoA kinase (186 aa).

Residues aspartate 43, isoleucine 44, valine 45, aspartate 62, glutamate 120, and aspartate 143 each contribute to the GTP site.

Belongs to the GTP-dependent DPCK family.

It carries out the reaction 3'-dephospho-CoA + GTP = GDP + CoA + H(+). The protein operates within cofactor biosynthesis; coenzyme A biosynthesis. Its function is as follows. Catalyzes the GTP-dependent phosphorylation of the 3'-hydroxyl group of dephosphocoenzyme A to form coenzyme A (CoA). The polypeptide is GTP-dependent dephospho-CoA kinase (Haloquadratum walsbyi (strain DSM 16790 / HBSQ001)).